A 437-amino-acid chain; its full sequence is Phosphoethanolamine N-methyltransferase 2 (437 aa).

N-methylethanolamine phosphate contacts are provided by residues 186-187 and Tyr195; that span reads QY. Residues 204-205, Gly232, Asp254, 281-282, and Arg298 contribute to the S-adenosyl-L-homocysteine site; these read IS and DA. N-methylethanolamine phosphate-binding positions include Tyr329, Tyr343, 347–349, and Lys415; that span reads RAY.

Belongs to the class I-like SAM-binding methyltransferase superfamily.

The enzyme catalyses N-methylethanolamine phosphate + S-adenosyl-L-methionine = N,N-dimethylethanolamine phosphate + S-adenosyl-L-homocysteine + H(+). It catalyses the reaction N,N-dimethylethanolamine phosphate + S-adenosyl-L-methionine = phosphocholine + S-adenosyl-L-homocysteine + H(+). The protein operates within phospholipid metabolism; phosphatidylcholine biosynthesis; phosphocholine from phosphoethanolamine. Its activity is regulated as follows. Feedback inhibition by phosphatidylcholine and also by S-adenosylhomocysteine. Functionally, catalyzes the last two methylation reactions in the synthesis of phosphocholine, by converting phospho-monomethylethanolamine (N-methylethanolamine phosphate) into phospho-dimethylethanolamine (N,N-dimethylethanolamine phosphate) and the latter into phosphocholine. Phosphocholine is a precursor for phosphatidylcholine, a major component in membranes and a precursor itself in the production of glycoconjugates secreted by parasitic nematodes to avoid host immune responses. In Caenorhabditis elegans, this protein is Phosphoethanolamine N-methyltransferase 2.